The following is an 801-amino-acid chain: Leucine--tRNA ligase (801 aa).

Residues 39–50 (PYPSGAGIHVGH) carry the 'HIGH' region motif. Positions 578–582 (KMSKS) match the 'KMSKS' region motif. Lysine 581 provides a ligand contact to ATP.

Belongs to the class-I aminoacyl-tRNA synthetase family.

The protein localises to the cytoplasm. The enzyme catalyses tRNA(Leu) + L-leucine + ATP = L-leucyl-tRNA(Leu) + AMP + diphosphate. This is Leucine--tRNA ligase from Mesoplasma florum (strain ATCC 33453 / NBRC 100688 / NCTC 11704 / L1) (Acholeplasma florum).